The following is a 259-amino-acid chain: Pyrroloquinoline-quinone synthase (259 aa).

The protein belongs to the PqqC family.

The enzyme catalyses 6-(2-amino-2-carboxyethyl)-7,8-dioxo-1,2,3,4,7,8-hexahydroquinoline-2,4-dicarboxylate + 3 O2 = pyrroloquinoline quinone + 2 H2O2 + 2 H2O + H(+). The protein operates within cofactor biosynthesis; pyrroloquinoline quinone biosynthesis. In terms of biological role, ring cyclization and eight-electron oxidation of 3a-(2-amino-2-carboxyethyl)-4,5-dioxo-4,5,6,7,8,9-hexahydroquinoline-7,9-dicarboxylic-acid to PQQ. The polypeptide is Pyrroloquinoline-quinone synthase (Bradyrhizobium diazoefficiens (strain JCM 10833 / BCRC 13528 / IAM 13628 / NBRC 14792 / USDA 110)).